The following is an 844-amino-acid chain: Striatin-interacting proteins 2 (844 aa).

Low complexity predominate over residues 1 to 18 (MDDPAAPGPAGSPANDNG). The tract at residues 1–58 (MDDPAAPGPAGSPANDNGNGNGNGNGNGNGGKGKPAVPKGRETFRNQRRESEGSVDCP) is disordered. The span at 19 to 33 (NGNGNGNGNGNGGKG) shows a compositional bias: gly residues. Over residues 39-52 (KGRETFRNQRRESE) the composition is skewed to basic and acidic residues. A phosphoserine mark is found at Ser328, Ser339, and Ser364. Residues 331–355 (SYTLDLGESQLAPPPSKLRGRRGSR) form a disordered region. Positions 370-422 (ERDLFKTEEPATEEEEESAADGERTLDGELDLLEQDPLVPPPPSQTPLSTDRV) are disordered. Positions 379–389 (PATEEEEESAA) are enriched in acidic residues.

It belongs to the STRIP family. Part of the core of STRIPAK complexes composed of PP2A catalytic and scaffolding subunits, the striatins (PP2A regulatory subunits), the striatin-associated proteins MOB4, STRIP1 and STRIP2, PDCD10 and members of the STE20 kinases, such as STK24 and STK26. Interacts with CTTNBP2NL.

The protein localises to the cytoplasm. In terms of biological role, plays a role in the regulation of cell morphology and cytoskeletal organization. Required in the control of cell shape. Calmodulin-binding scaffolding protein which is the center of the striatin-interacting phosphatase and kinase (STRIPAK) complexes. STRIPAK complexes have critical roles in protein (de)phosphorylation and are regulators of multiple signaling pathways including Hippo, MAPK, nuclear receptor and cytoskeleton remodeling. Different types of STRIPAK complexes are involved in a variety of biological processes such as cell growth, differentiation, apoptosis, metabolism and immune regulation. The polypeptide is Striatin-interacting proteins 2 (Strip2) (Mus musculus (Mouse)).